The chain runs to 313 residues: Ribosomal protein L11 methyltransferase (313 aa).

The S-adenosyl-L-methionine site is built by Thr-164, Gly-185, Asp-207, and Asn-249.

It belongs to the methyltransferase superfamily. PrmA family.

It is found in the cytoplasm. It carries out the reaction L-lysyl-[protein] + 3 S-adenosyl-L-methionine = N(6),N(6),N(6)-trimethyl-L-lysyl-[protein] + 3 S-adenosyl-L-homocysteine + 3 H(+). In terms of biological role, methylates ribosomal protein L11. This is Ribosomal protein L11 methyltransferase from Clostridium perfringens (strain ATCC 13124 / DSM 756 / JCM 1290 / NCIMB 6125 / NCTC 8237 / Type A).